We begin with the raw amino-acid sequence, 126 residues long: Large ribosomal subunit protein bL12 (126 aa).

Belongs to the bacterial ribosomal protein bL12 family. As to quaternary structure, homodimer. Part of the ribosomal stalk of the 50S ribosomal subunit. Forms a multimeric L10(L12)X complex, where L10 forms an elongated spine to which 2 to 4 L12 dimers bind in a sequential fashion. Binds GTP-bound translation factors.

Forms part of the ribosomal stalk which helps the ribosome interact with GTP-bound translation factors. Is thus essential for accurate translation. This Trichlorobacter lovleyi (strain ATCC BAA-1151 / DSM 17278 / SZ) (Geobacter lovleyi) protein is Large ribosomal subunit protein bL12.